Reading from the N-terminus, the 412-residue chain is Autophagy-related protein 18 (412 aa).

WD repeat units follow at residues 100-139, 142-183, and 186-226; these read RFNKSVLTVRLNRDRIVVCLEDCIYIYNLKDMKMMHNIMD, TNKL…SVST, and AHEG…RLFE. A L/FRRG motif motif is present at residues 227 to 230; it reads FRRG. Residues 232-271 form a WD 4 repeat; that stretch reads TRCVNIYSLCFSSDSKYLTSSSNTETVHVFKLEKTEGVDN. The tract at residues 363–412 is disordered; the sequence is HNIGPKSDTSRASPTSTGSGGAAKSAEASNQSVPNMDDPDDFPPMSHTSG. Residues 372–391 show a composition bias toward low complexity; the sequence is SRASPTSTGSGGAAKSAEAS.

Belongs to the WD repeat PROPPIN family. In terms of tissue distribution, expressed in neurons and intestinal cells.

It is found in the cytoplasmic vesicle. Its subcellular location is the phagosome membrane. The protein localises to the cytoplasm. Component of the autophagy machinery that is recruited to phosphatidylinositols on preautophagosomal structures, which are early autophagic structures, to promote autophagosome formation, and the subsequent degradation and clearance of engulfed apoptotic cells and P-granules in somatic cells. In particular, binds with high affinity to phosphatidylinositols including phosphatidylinositol 3-phosphate (PtdIns(3)P), phosphatidylinositol 4-phosphate (PtdIns(4)P), and phosphatidylinositol 5-phosphate (PtdIns(5)P), and more weakly to phosphatidylinositol 3,5-bisphosphate (PtdIns(3,5)P2). Plays a role in mitophagy, which is the autophagic consumption of mitochondria, in response to dietary restriction. Involved in xenophagy, the autophagy-mediated degradation of pathogens and pathogen products, such as toxins. Also plays a role in membrane-pore repair. In a daf-18/PTEN- and daf-16/FOXO-dependent manner, required for the proliferation of germ stem cell progenitors in the gonad during the late phases of larval development. By regulating the release of neurotransmitters and neuropeptides, involved in the control of lifespan in response to dietary restriction and daf-2 signaling. Probably through its involvement in autophagy, required for dauer formation. This Caenorhabditis elegans protein is Autophagy-related protein 18.